The sequence spans 1507 residues: Lhr helicase/ probable uracil glycosylase (1507 aa).

The lhr-Core stretch occupies residues 1-856; the sequence is MTTNGADPLG…ASLLFGYVGA (856 aa). Residues Phe24, Gln31, Lys54, and Thr55 each coordinate ATP. A Helicase ATP-binding domain is found at 35–226; that stretch reads WSAISEGNNT…FLSGQAPTTI (192 aa). Residues Arg122, Arg131, Thr145, Ser148, and Met152 each coordinate ssDNA. The ATP site is built by Asp170 and Glu171. The DEAH box signature appears at 170–173; sequence DEVH. Residues Ser253, Trp255, and Arg279 each coordinate ssDNA. One can recognise a Helicase C-terminal domain in the interval 257 to 451; the sequence is DVEERIVDLV…VLAQHTVAVA (195 aa). ATP contacts are provided by Ile377, Arg394, and His397. 7 residues coordinate ssDNA: Lys410, Gln518, Arg519, Ile528, Trp597, Asp600, and Arg777. The WH domain stretch occupies residues 436–529; the sequence is PANPLDVLAQ…LAVTSGGAIP (94 aa). Residues 530-856 are domain 4; that stretch reads DRGMFTVYLA…ASLLFGYVGA (327 aa). The segment at 857 to 1507 is CTD; it reads FMYEGDSPLA…SRTPRGLRLR (651 aa).

The protein belongs to the Lhr helicase family. Monomer. Homooligomerizes, possibly a homotetramer. Requires Ca(2+) as cofactor.

It carries out the reaction Couples ATP hydrolysis with the unwinding of duplex DNA by translocating in the 3'-5' direction.. It catalyses the reaction ATP + H2O = ADP + phosphate + H(+). The catalysed reaction is Hydrolyzes single-stranded DNA or mismatched double-stranded DNA and polynucleotides, releasing free uracil.. A 3'-5' helicase involved in repair of at least 3 types of DNA cross-links, mitomycin C (MMC), cisplatin, and psoralen-UVA. Translocates 3'-to-5' on single-stranded (ss)DNA, unwinding any encountered duplex nucleic acid. A 3'-ssDNA loading strand of at least 15 nucleotides is required for helicase activity. An RNA:DNA hybrid with a 3'-ssDNA loading strand is an 8-fold better helicase substrate than 3'-tailed double-stranded (ds)DNA; substrates where the helicase loads on a 3'-ssRNA tail (DNA:RNA and RNA:RNA) are not unwound. Only (d)ATP is hydrolyzed by the protein, which has no ATPase activity in the absence of ssDNA or ssRNA. Arg-279 and Trp-597 are needed to couple ATP hydrolysis to mechanical work; a salt bridge between Arg-280 and Glu-550 closes a clamp around the ssDNA that is not large enough for dsDNA, while Ile-528 wedges between bases of the loading strand. Functionally, excises uracil residues from ssDNA. Uracil residues in DNA can arise as a result of misincorporation of dUMP residues by DNA polymerase or due to deamination of cytosine. The chain is Lhr helicase/ probable uracil glycosylase from Mycolicibacterium smegmatis (strain ATCC 700084 / mc(2)155) (Mycobacterium smegmatis).